Consider the following 658-residue polypeptide: Pentatricopeptide repeat-containing protein 7, mitochondrial (658 aa).

The transit peptide at 1–29 (MRNCVSPLLFAWTKHLRLREFKIPFPNRL) directs the protein to the mitochondrion. 2 PPR repeats span residues 130-164 (VKKR…TPIW) and 220-254 (LYVE…SESL).

It is found in the mitochondrion. Functionally, mitochondrial RNA-binding protein required for the stability of the atp6 mRNA. This Schizosaccharomyces pombe (strain 972 / ATCC 24843) (Fission yeast) protein is Pentatricopeptide repeat-containing protein 7, mitochondrial (ppr7).